A 115-amino-acid polypeptide reads, in one-letter code: U3-lycotoxin-Ls1k (115 aa).

An N-terminal signal peptide occupies residues 1 to 20 (MKFVLLFGVLLVTLFSYSSA). The propeptide occupies 21 to 44 (EMLDDFDQADEDELLSLIEKEEAR). 4 cysteine pairs are disulfide-bonded: Cys-48-Cys-63, Cys-55-Cys-72, Cys-62-Cys-87, and Cys-74-Cys-85.

This sequence belongs to the neurotoxin 19 (CSTX) family. 01 subfamily. As to expression, expressed by the venom gland.

The protein resides in the secreted. This chain is U3-lycotoxin-Ls1k, found in Lycosa singoriensis (Wolf spider).